Consider the following 189-residue polypeptide: MATFSTNEFRGGLKIMLDGDPYTIVENEFVKPGKGQAFNRTKVRNLKTGRVLERTFKSGESVEAADVLEMNMQYLYKDEDNWYFMNPETFEQLPAAQAAVADAEKWLLEQDECTVVLWNNNIISVTPPNFVERKIVDTDPGLRGDTSGGGGKPATLETGAVVRVPLFLNIGDTIKVDTRSGEYLGRAKE.

K34 is subject to N6-(3,6-diaminohexanoyl)-5-hydroxylysine.

It belongs to the elongation factor P family. Post-translationally, may be beta-lysylated on the epsilon-amino group of Lys-34 by the combined action of EpmA and EpmB, and then hydroxylated on the C5 position of the same residue by EpmC (if this protein is present). Lysylation is critical for the stimulatory effect of EF-P on peptide-bond formation. The lysylation moiety may extend toward the peptidyltransferase center and stabilize the terminal 3-CCA end of the tRNA. Hydroxylation of the C5 position on Lys-34 may allow additional potential stabilizing hydrogen-bond interactions with the P-tRNA.

The protein resides in the cytoplasm. It participates in protein biosynthesis; polypeptide chain elongation. Its function is as follows. Involved in peptide bond synthesis. Alleviates ribosome stalling that occurs when 3 or more consecutive Pro residues or the sequence PPG is present in a protein, possibly by augmenting the peptidyl transferase activity of the ribosome. Modification of Lys-34 is required for alleviation. The sequence is that of Elongation factor P from Dichelobacter nodosus (strain VCS1703A).